We begin with the raw amino-acid sequence, 471 residues long: Bifunctional protein GlmU (471 aa).

Residues 1 to 235 (MVAVAILAAG…YQEIFGINNR (235 aa)) are pyrophosphorylase. UDP-N-acetyl-alpha-D-glucosamine-binding positions include 7-10 (LAAG), K21, Q82, and 87-88 (GT). D112 lines the Mg(2+) pocket. 4 residues coordinate UDP-N-acetyl-alpha-D-glucosamine: G149, E164, N179, and N233. Mg(2+) is bound at residue N233. Positions 236–256 (KHLAKAHEILQVRVKDDWMEA) are linker. Residues 257–471 (GVTLIDPDSI…SKKEENKSSP (215 aa)) form an N-acetyltransferase region. Positions 338 and 356 each coordinate UDP-N-acetyl-alpha-D-glucosamine. H368 acts as the Proton acceptor in catalysis. Residues Y371 and N382 each contribute to the UDP-N-acetyl-alpha-D-glucosamine site. Acetyl-CoA-binding positions include A385, 391 to 392 (NY), S410, A428, and R445.

The protein in the N-terminal section; belongs to the N-acetylglucosamine-1-phosphate uridyltransferase family. It in the C-terminal section; belongs to the transferase hexapeptide repeat family. In terms of assembly, homotrimer. Mg(2+) is required as a cofactor.

It is found in the cytoplasm. It catalyses the reaction alpha-D-glucosamine 1-phosphate + acetyl-CoA = N-acetyl-alpha-D-glucosamine 1-phosphate + CoA + H(+). It carries out the reaction N-acetyl-alpha-D-glucosamine 1-phosphate + UTP + H(+) = UDP-N-acetyl-alpha-D-glucosamine + diphosphate. It participates in nucleotide-sugar biosynthesis; UDP-N-acetyl-alpha-D-glucosamine biosynthesis; N-acetyl-alpha-D-glucosamine 1-phosphate from alpha-D-glucosamine 6-phosphate (route II): step 2/2. It functions in the pathway nucleotide-sugar biosynthesis; UDP-N-acetyl-alpha-D-glucosamine biosynthesis; UDP-N-acetyl-alpha-D-glucosamine from N-acetyl-alpha-D-glucosamine 1-phosphate: step 1/1. Its pathway is bacterial outer membrane biogenesis; LPS lipid A biosynthesis. Functionally, catalyzes the last two sequential reactions in the de novo biosynthetic pathway for UDP-N-acetylglucosamine (UDP-GlcNAc). The C-terminal domain catalyzes the transfer of acetyl group from acetyl coenzyme A to glucosamine-1-phosphate (GlcN-1-P) to produce N-acetylglucosamine-1-phosphate (GlcNAc-1-P), which is converted into UDP-GlcNAc by the transfer of uridine 5-monophosphate (from uridine 5-triphosphate), a reaction catalyzed by the N-terminal domain. The sequence is that of Bifunctional protein GlmU from Trichodesmium erythraeum (strain IMS101).